A 130-amino-acid chain; its full sequence is MAITQNYGTGRRKSSTARVFLRKGTGKITVNDRPLDEFFGRETARMIVRQPLELTKNTESFDILVTASGGGTTGQAGAIRLGIARALVEYDETLKSELRKAGFMTRDAREVERKKVGLHKARRATQFSKR.

It belongs to the universal ribosomal protein uS9 family.

The protein is Small ribosomal subunit protein uS9 of Xanthomonas oryzae pv. oryzae (strain MAFF 311018).